A 247-amino-acid polypeptide reads, in one-letter code: 5'-nucleotidase SurE (247 aa).

Aspartate 8, aspartate 9, serine 39, and asparagine 91 together coordinate a divalent metal cation.

It belongs to the SurE nucleotidase family. A divalent metal cation is required as a cofactor.

The protein resides in the cytoplasm. It carries out the reaction a ribonucleoside 5'-phosphate + H2O = a ribonucleoside + phosphate. Nucleotidase that shows phosphatase activity on nucleoside 5'-monophosphates. The sequence is that of 5'-nucleotidase SurE from Leptospira biflexa serovar Patoc (strain Patoc 1 / Ames).